The following is a 372-amino-acid chain: Spermidine/putrescine import ATP-binding protein PotA (372 aa).

Residues 12–242 enclose the ABC transporter domain; it reads IQLKGLNKSF…PTNLFVARFI (231 aa). Residue 44–51 participates in ATP binding; that stretch reads GPSGCGKT.

Belongs to the ABC transporter superfamily. Spermidine/putrescine importer (TC 3.A.1.11.1) family. As to quaternary structure, the complex is composed of two ATP-binding proteins (PotA), two transmembrane proteins (PotB and PotC) and a solute-binding protein (PotD).

Its subcellular location is the cell inner membrane. The enzyme catalyses ATP + H2O + polyamine-[polyamine-binding protein]Side 1 = ADP + phosphate + polyamineSide 2 + [polyamine-binding protein]Side 1.. Its function is as follows. Part of the ABC transporter complex PotABCD involved in spermidine/putrescine import. Responsible for energy coupling to the transport system. The sequence is that of Spermidine/putrescine import ATP-binding protein PotA from Photobacterium profundum (strain SS9).